Consider the following 1689-residue polypeptide: Cullin-7 (1689 aa).

Residues 349–422 (RASFASFNTY…HWHMLEILGF (74 aa)) enclose the CPH domain. A DOC domain is found at 793–972 (PIQIPFFDVF…HTRLFYMVRA (180 aa)). Positions 1321–1337 (VAHEDSGREDKSKKEEA) are enriched in basic and acidic residues. The tract at residues 1321–1371 (VAHEDSGREDKSKKEEAIGEAAAVAMAEEEDQGKKEEGEEEGEGEDEEEER) is disordered. The segment covering 1358–1370 (GEEEGEGEDEEEE) has biased composition (acidic residues). Lys1567 is covalently cross-linked (Glycyl lysine isopeptide (Lys-Gly) (interchain with G-Cter in NEDD8)).

The protein belongs to the cullin family. Component of the 3M complex, composed of core components CUL7, CCDC8 and OBSL1. Component of the Cul7-RING(FBXW8) complex consisting of CUL7, RBX1, SKP1 and FBXW8. Within the Cul7-RING(FBXW8) complex interacts with FBXW8 and RBX1, but not with SKP1. Interacts with CUL1 (via the C-terminal domain); the interaction seems to be mediated by FBXW8; it is likely specific to FBXW8, but not other F-box proteins. Interacts (via the CPH domain) with p53/TP53; the interaction preferentially involves tetrameric and dimeric p53/TP53; this interaction recruits p53/TP53 for ubiquitination by neddylated CUL1-RBX1. The CUL7-CUL9 heterodimer seems to interact specifically with p53/TP53. Interacts with FBXW8; interaction is mutually exclusive of binding to CUL9 or p53/TP53. Interacts with CUL9; leading to inhibited CUL9 activity. Interacts with OBSL1. Interacts (as part of the 3M complex) with HDAC4 and HDAC5; it is negatively regulated by ANKRA2.

It is found in the cytoplasm. The protein localises to the cytoskeleton. It localises to the microtubule organizing center. The protein resides in the centrosome. Its subcellular location is the perinuclear region. It is found in the golgi apparatus. It participates in protein modification; protein ubiquitination. In terms of biological role, core component of the 3M and Cul7-RING(FBXW8) complexes, which mediate the ubiquitination and subsequent proteasomal degradation of target proteins. Core component of the 3M complex, a complex required to regulate microtubule dynamics and genome integrity. It is unclear how the 3M complex regulates microtubules, it could act by controlling the level of a microtubule stabilizer. The Cul7-RING(FBXW8) complex alone lacks ubiquitination activity and does not promote polyubiquitination and proteasomal degradation of p53/TP53. However it mediates recruitment of p53/TP53 for ubiquitination by neddylated CUL1-RBX1. Interaction with CUL9 is required to inhibit CUL9 activity and ubiquitination of BIRC5. The Cul7-RING(FBXW8) complex also mediates ubiquitination and consequent degradation of target proteins such as GORASP1, IRS1 and MAP4K1/HPK1. Ubiquitination of GORASP1 regulates Golgi morphogenesis and dendrite patterning in brain. Mediates ubiquitination and degradation of IRS1 in a mTOR-dependent manner: the Cul7-RING(FBXW8) complex recognizes and binds IRS1 previously phosphorylated by S6 kinase (RPS6KB1 or RPS6KB2). The Cul7-RING(FBXW8) complex also mediates ubiquitination of MAP4K1/HPK1: recognizes and binds autophosphorylated MAP4K1/HPK1, leading to its degradation, thereby affecting cell proliferation and differentiation. Acts as a regulator in trophoblast cell epithelial-mesenchymal transition and placental development. While the Cul7-RING(FBXW8) and the 3M complexes are associated and involved in common processes, CUL7 and the Cul7-RING(FBXW8) complex may have additional functions. Probably plays a role in the degradation of proteins involved in endothelial proliferation and/or differentiation. The protein is Cullin-7 (Cul7) of Mus musculus (Mouse).